We begin with the raw amino-acid sequence, 108 residues long: UPF0145 protein gll1048 (108 aa).

Belongs to the UPF0145 family.

This chain is UPF0145 protein gll1048, found in Gloeobacter violaceus (strain ATCC 29082 / PCC 7421).